A 42-amino-acid polypeptide reads, in one-letter code: Photosystem I reaction center subunit IX (42 aa).

A helical membrane pass occupies residues 7-27; sequence YLSTAPVLATLWFGFLAGLLI.

The protein belongs to the PsaJ family.

Its subcellular location is the plastid. The protein localises to the chloroplast thylakoid membrane. Functionally, may help in the organization of the PsaE and PsaF subunits. The sequence is that of Photosystem I reaction center subunit IX from Marchantia polymorpha (Common liverwort).